Reading from the N-terminus, the 397-residue chain is Polyphosphatase (397 aa).

Residues Asp41, Asp127, and His148 each coordinate Mg(2+). Mn(2+) contacts are provided by Asp41, Asp127, and His148. The ATP site is built by His149, Ser286, and Arg381.

Belongs to the PPase class C family. Mn(2+) is required as a cofactor. Mg(2+) serves as cofactor.

The catalysed reaction is [phosphate](n) + H2O = [phosphate](n-1) + phosphate + H(+). Functionally, polyphosphatase (polyPase) involved in the degradation of inorganic polyphosphates (polyP) that is able to degrade a range of chains from three to several hundreds of residues in a highly processive manner. Exclusively shows exopolyphosphatase activity, cleaving inside the polyP chain. The chain is Polyphosphatase from Saccharomyces cerevisiae (strain ATCC 204508 / S288c) (Baker's yeast).